We begin with the raw amino-acid sequence, 121 residues long: Small ribosomal subunit protein uS13 (121 aa).

A disordered region spans residues 95–121 (LPVRGQNTKNNARTRKGKAVAIAGKKK). Residues 106–121 (ARTRKGKAVAIAGKKK) show a composition bias toward basic residues.

This sequence belongs to the universal ribosomal protein uS13 family. Part of the 30S ribosomal subunit. Forms a loose heterodimer with protein S19. Forms two bridges to the 50S subunit in the 70S ribosome.

Its function is as follows. Located at the top of the head of the 30S subunit, it contacts several helices of the 16S rRNA. In the 70S ribosome it contacts the 23S rRNA (bridge B1a) and protein L5 of the 50S subunit (bridge B1b), connecting the 2 subunits; these bridges are implicated in subunit movement. Contacts the tRNAs in the A and P-sites. This is Small ribosomal subunit protein uS13 from Streptococcus equi subsp. zooepidemicus (strain H70).